The primary structure comprises 110 residues: Ribonuclease P protein component 4 (110 aa).

Zn(2+) is bound by residues C65, C68, C94, and C97.

This sequence belongs to the eukaryotic/archaeal RNase P protein component 4 family. Consists of a catalytic RNA component and at least 4-5 protein subunits. It depends on Zn(2+) as a cofactor.

It is found in the cytoplasm. The enzyme catalyses Endonucleolytic cleavage of RNA, removing 5'-extranucleotides from tRNA precursor.. Its function is as follows. Part of ribonuclease P, a protein complex that generates mature tRNA molecules by cleaving their 5'-ends. This is Ribonuclease P protein component 4 from Methanococcus maripaludis (strain C6 / ATCC BAA-1332).